A 369-amino-acid polypeptide reads, in one-letter code: Protein HGH1 homolog (369 aa).

Belongs to the HGH1 family.

The sequence is that of Protein HGH1 homolog from Drosophila melanogaster (Fruit fly).